A 486-amino-acid polypeptide reads, in one-letter code: Outer dynein arm-docking complex subunit 4 (486 aa).

TPR repeat units follow at residues 14–47, 49–81, and 82–115; these read FTTY…QPDD, NCLV…NKNY, and FKGL…RPEL. Positions 153–180 are disordered; the sequence is GVHPQNLNPSNKKESKKHSKKTDKGEKT. 4 TPR repeats span residues 314 to 347, 354 to 387, 391 to 424, and 431 to 464; these read GNLH…AKKC, SRAL…ACGG, AWLF…ADDI, and LNAS…AKLL.

As to quaternary structure, component of the outer dynein arm-docking complex along with ODAD1, ODAD2 and ODAD3.

Its subcellular location is the cytoplasm. It localises to the cytoskeleton. The protein resides in the cilium axoneme. Component of the outer dynein arm-docking complex (ODA-DC) that mediates outer dynein arms (ODA) binding onto the doublet microtubule. Plays an essential role for the assembly of ODA-DC and in the docking of ODA in ciliary axoneme. The sequence is that of Outer dynein arm-docking complex subunit 4 (odad4) from Danio rerio (Zebrafish).